Here is a 363-residue protein sequence, read N- to C-terminus: Cysteine proteinase 15A (363 aa).

The first 18 residues, methionine 1–alanine 18, serve as a signal peptide directing secretion. The propeptide at valine 19–asparagine 131 is activation peptide. 2 cysteine pairs are disulfide-bonded: cysteine 153/cysteine 203 and cysteine 187/cysteine 236. Cysteine 156 is an active-site residue. The N-linked (GlcNAc...) asparagine glycan is linked to asparagine 249. A disulfide bond links cysteine 292 and cysteine 347. Active-site residues include histidine 299 and asparagine 326.

It belongs to the peptidase C1 family.

This chain is Cysteine proteinase 15A, found in Pisum sativum (Garden pea).